The sequence spans 562 residues: Protein wntless (562 aa).

Residues 1-13 (MSGTILENLSGRK) are Cytoplasmic-facing. Residues 14-34 (LSILVSSLLLCQVACFLIGGL) form a helical membrane-spanning segment. Topologically, residues 35–239 (YAPVPAGHQI…AIHQNGGFTQ (205 aa)) are lumenal. N-linked (GlcNAc...) asparagine glycosylation is found at asparagine 58 and asparagine 103. A helical membrane pass occupies residues 240–260 (VWLLLKSVLFPFIIGIMVWFW). At 261–270 (RRVHILQRSP) the chain is on the cytoplasmic side. Residues 271–291 (ALLEYMLLYLGGALSFLNLPL) form a helical membrane-spanning segment. The Lumenal segment spans residues 292 to 311 (EYLTLSFEMPYMLLLSDVRQ). Residues 312-332 (GIFYAMLLSFWLVFAGEHMLI) form a helical membrane-spanning segment. Residues 333 to 344 (QDSPNKSTIRSR) are Cytoplasmic-facing. Residues 345 to 365 (YWKHLSAVVVGCISLFVFDIC) form a helical membrane-spanning segment. Over 366-390 (ERGMQLRNPFYSIWTTPLGAKVAMS) the chain is Lumenal. A helical membrane pass occupies residues 391 to 411 (FIVLAGVSAGIYFLFLCYMVW). The Cytoplasmic portion of the chain corresponds to 412 to 441 (KVFKDIGDKRTSLPSMSQARRLHYEGLIYR). Residues 442–462 (FKFLMLATLLCAGLTVAGFIM) traverse the membrane as a helical segment. Topologically, residues 463 to 482 (GQMAEGHWKWNEDIEIQLTS) are lumenal. The helical transmembrane segment at 483–503 (AFLTGVYGMWNIYIFALLILY) threads the bilayer. The Cytoplasmic portion of the chain corresponds to 504–562 (APSHKQWPTMRHSDETTQSNENIVASAASEEIEFSNLPSDSNPSEISSLTSFTRKVAFD). Residues 538-562 (SNLPSDSNPSEISSLTSFTRKVAFD) form a disordered region. The segment covering 539 to 556 (NLPSDSNPSEISSLTSFT) has biased composition (polar residues).

The protein belongs to the wntless family. In terms of assembly, interacts with wg; in the Golgi. Interacts with Vps35, a component of the retromer complex; wls stability is regulated by Vps35.

Its subcellular location is the presynaptic cell membrane. It is found in the postsynaptic cell membrane. The protein resides in the cell membrane. It localises to the endoplasmic reticulum membrane. The protein localises to the endosome membrane. Its subcellular location is the golgi apparatus membrane. A segment polarity gene required for wingless (wg)-dependent patterning processes, acting in both wg-sending cells and wg-target cells. In non-neuronal cells wls directs wg secretion. The wls traffic loop encompasses the Golgi, the cell surface, an endocytic compartment and a retrograde route leading back to the Golgi, and involves clathrin-mediated endocytosis and the retromer complex (a conserved protein complex consisting of Vps35 and Vps26). In neuronal cells (the larval motorneuron NMJ), the wg signal moves across the synapse via the release of wls-containing exosome-like vesicles. Postsynaptic wls is required for the trafficking of fz2 through the fz2-interacting protein Grip. This chain is Protein wntless, found in Drosophila mojavensis (Fruit fly).